We begin with the raw amino-acid sequence, 202 residues long: Small ribosomal subunit protein uS4 (202 aa).

Basic residues predominate over residues 1 to 13 (MSRYRGPRLRVTR). Residues 1–42 (MSRYRGPRLRVTRRLGELPGLTRKASKKSNPPGQHGQARRKR) are disordered. Positions 90 to 152 (NRLDNVCFRL…KASKKLVEGN (63 aa)) constitute an S4 RNA-binding domain.

Belongs to the universal ribosomal protein uS4 family. As to quaternary structure, part of the 30S ribosomal subunit. Contacts protein S5. The interaction surface between S4 and S5 is involved in control of translational fidelity.

Functionally, one of the primary rRNA binding proteins, it binds directly to 16S rRNA where it nucleates assembly of the body of the 30S subunit. Its function is as follows. With S5 and S12 plays an important role in translational accuracy. The protein is Small ribosomal subunit protein uS4 of Prochlorococcus marinus subsp. pastoris (strain CCMP1986 / NIES-2087 / MED4).